The following is a 95-amino-acid chain: Co-chaperonin GroES (95 aa).

This sequence belongs to the GroES chaperonin family. In terms of assembly, heptamer of 7 subunits arranged in a ring. Interacts with the chaperonin GroEL.

The protein resides in the cytoplasm. Its function is as follows. Together with the chaperonin GroEL, plays an essential role in assisting protein folding. The GroEL-GroES system forms a nano-cage that allows encapsulation of the non-native substrate proteins and provides a physical environment optimized to promote and accelerate protein folding. GroES binds to the apical surface of the GroEL ring, thereby capping the opening of the GroEL channel. The sequence is that of Co-chaperonin GroES from Bordetella bronchiseptica (strain ATCC BAA-588 / NCTC 13252 / RB50) (Alcaligenes bronchisepticus).